The chain runs to 315 residues: tRNA pseudouridine synthase B (315 aa).

Residue aspartate 47 is the Nucleophile of the active site.

Belongs to the pseudouridine synthase TruB family. Type 1 subfamily.

It catalyses the reaction uridine(55) in tRNA = pseudouridine(55) in tRNA. In terms of biological role, responsible for synthesis of pseudouridine from uracil-55 in the psi GC loop of transfer RNAs. This chain is tRNA pseudouridine synthase B, found in Shewanella amazonensis (strain ATCC BAA-1098 / SB2B).